The sequence spans 386 residues: Methylthioribose-1-phosphate isomerase (386 aa).

The active-site Proton donor is Asp258.

It belongs to the eIF-2B alpha/beta/delta subunits family. MtnA subfamily.

The protein localises to the cytoplasm. It is found in the nucleus. The enzyme catalyses 5-(methylsulfanyl)-alpha-D-ribose 1-phosphate = 5-(methylsulfanyl)-D-ribulose 1-phosphate. It participates in amino-acid biosynthesis; L-methionine biosynthesis via salvage pathway; L-methionine from S-methyl-5-thio-alpha-D-ribose 1-phosphate: step 1/6. Functionally, catalyzes the interconversion of methylthioribose-1-phosphate (MTR-1-P) into methylthioribulose-1-phosphate (MTRu-1-P). The sequence is that of Methylthioribose-1-phosphate isomerase from Postia placenta (strain ATCC 44394 / Madison 698-R) (Brown rot fungus).